A 392-amino-acid chain; its full sequence is MTKEFEFLKAELNSMKENHTWQDIKQLESMQGPSVTVNHQKVIQLSSNNYLGFTSHPRLINAAQEAVQQYGAGTGSVRTIAGTFTMHQELEKKLAAFKKTEAALVFQSGFTTNQGVLSSILSKEDIVISDELNHASIIDGIRLTKADKKVYQHVNMSDLERVLRKSMNYRMRLIVTDGVFSMDGNIAPLPDIVELAEKYDAFVMVDDAHASGVLGENGRGTVNHFGLDGRVHIQVGTLSKAIGVLGGYAAGSKVLIDYLRHKGRPFLFSTSHPPAVTAACMEAIDVLLEEPEHMERLWENTAYFKAMLVKMGLTLTKSETPILPILIGDEGVAKQFSDQLLSRGVFAQSIVFPTVAKGKARIRTIITAEHTKDELDQALDVIEKTAKELQLL.

109 to 110 (GF) is a pyridoxal 5'-phosphate binding site. Histidine 134 lines the substrate pocket. Residues serine 181, 206 to 209 (DDAH), and 237 to 240 (TLSK) each bind pyridoxal 5'-phosphate. An N6-(pyridoxal phosphate)lysine modification is found at lysine 240. Residue threonine 354 coordinates substrate.

Belongs to the class-II pyridoxal-phosphate-dependent aminotransferase family. BioF subfamily. In terms of assembly, homodimer. Pyridoxal 5'-phosphate serves as cofactor.

It carries out the reaction 6-carboxyhexanoyl-[ACP] + L-alanine + H(+) = (8S)-8-amino-7-oxononanoate + holo-[ACP] + CO2. It participates in cofactor biosynthesis; biotin biosynthesis. In terms of biological role, catalyzes the decarboxylative condensation of pimeloyl-[acyl-carrier protein] and L-alanine to produce 8-amino-7-oxononanoate (AON), [acyl-carrier protein], and carbon dioxide. In Bacillus subtilis (strain 168), this protein is 8-amino-7-oxononanoate synthase 1 (kbl).